The chain runs to 721 residues: Peroxisomal fatty acid beta-oxidation multifunctional protein AIM1 (721 aa).

E116 serves as the catalytic Nucleophile. Residue E136 is the Proton acceptor of the active site. Residues 719 to 721 (SKL) carry the Microbody targeting signal motif.

It in the N-terminal section; belongs to the enoyl-CoA hydratase/isomerase family. This sequence in the central section; belongs to the 3-hydroxyacyl-CoA dehydrogenase family. In terms of tissue distribution, widely expressed.

Its subcellular location is the peroxisome. It catalyses the reaction a (3S)-3-hydroxyacyl-CoA = a (2E)-enoyl-CoA + H2O. The enzyme catalyses a 4-saturated-(3S)-3-hydroxyacyl-CoA = a (3E)-enoyl-CoA + H2O. The catalysed reaction is (3S)-3-hydroxybutanoyl-CoA = (2E)-butenoyl-CoA + H2O. It carries out the reaction (3S)-hydroxyoctanoyl-CoA = (2E)-octenoyl-CoA + H2O. It catalyses the reaction (3S)-3-hydroxydodecanoyl-CoA = (2E)-dodecenoyl-CoA + H2O. The enzyme catalyses (3S)-hydroxytetradecanoyl-CoA = (2E)-tetradecenoyl-CoA + H2O. The catalysed reaction is (3S)-hydroxyhexanoyl-CoA = (2E)-hexenoyl-CoA + H2O. It carries out the reaction a (3Z)-enoyl-CoA = a 4-saturated (2E)-enoyl-CoA. It catalyses the reaction a (3E)-enoyl-CoA = a 4-saturated (2E)-enoyl-CoA. The enzyme catalyses (3S)-3-hydroxybutanoyl-CoA = (3R)-3-hydroxybutanoyl-CoA. The catalysed reaction is a (3S)-3-hydroxyacyl-CoA + NAD(+) = a 3-oxoacyl-CoA + NADH + H(+). It carries out the reaction (3S)-3-hydroxybutanoyl-CoA + NAD(+) = acetoacetyl-CoA + NADH + H(+). It catalyses the reaction (3S)-hydroxyhexanoyl-CoA + NAD(+) = 3-oxohexanoyl-CoA + NADH + H(+). The enzyme catalyses (3S)-hydroxyoctanoyl-CoA + NAD(+) = 3-oxooctanoyl-CoA + NADH + H(+). The catalysed reaction is (3S)-3-hydroxydodecanoyl-CoA + NAD(+) = 3-oxododecanoyl-CoA + NADH + H(+). It carries out the reaction (3S)-hydroxytetradecanoyl-CoA + NAD(+) = 3-oxotetradecanoyl-CoA + NADH + H(+). It participates in lipid metabolism; fatty acid beta-oxidation. In terms of biological role, involved in peroxisomal fatty acid beta-oxidation. Required for wound-induced jasmonate biosynthesis. Possesses enoyl-CoA hydratase activity against short chain substrates (C4-C6) and 3-hydroxyacyl-CoA dehydrogenase activity against chains of variable sizes (C6-C16). Possesses cinnamoyl-CoA hydratase activity and is involved in the peroxisomal beta-oxidation pathway for the biosynthesis of benzoic acid (BA). Required for the accumulation in seeds of benzoylated glucosinolates (BGs) and substituted hydroxybenzoylated choline esters, which are BA-containing secondary metabolites. Required for salicylic acid (SA) in seeds. The chain is Peroxisomal fatty acid beta-oxidation multifunctional protein AIM1 (AIM1) from Arabidopsis thaliana (Mouse-ear cress).